We begin with the raw amino-acid sequence, 569 residues long: MTKDAESTMTVGTYLAQRLVEIGIKNHFVVPGDYNLRLLDFLEYYPGLSEIGCCNELNCAFAAEGYARSNGIACAVVTYSVGALTAFDGIGGAYAENLPVILVSGSPNTNDLSSGHLLHHTLGTHDFEYQMEIAKKLTCAAVAIKRAEDAPVMIDHAIRQAILQHKPVYIEIPTNMANQPCPVPGPISAVISPEISDKESLEKATDIAAELISKKEKPILLAGPKLRAAGAESAFVKLAEALNCAAFIMPAAKGFYSEEHKNYAGVYWGEVSSSETTKAVYESSDLVIGAGVLFNDYSTVGWRAAPNPNILLNSDYTSVSIPGYVFSRVYMAEFLELLAKKVSKKPATLEAYNKARPQTVVPKAAEPKAALNRVEVMRQIQGLVDSNTTLYAETGDSWFNGLQMKLPAGAKFEVEMQWGHIGWSVPSAMGYAVAAPERRTIVMVGDGSFQLTGQEISQMIRHKLPVLIFLLNNRGYTIEIQIHDGPYNRIQNWDFAAFCESLNGETGKAKGLHAKTGEELTSAIKVALQNKEGPTLIECAIDTDDCTQELVDWGKAVASANARPPTADN.

D33 and H120 together coordinate substrate. Residue S233 is modified to Phosphoserine. The interval 396-478 is thiamine pyrophosphate binding; that stretch reads DSWFNGLQMK…FLLNNRGYTI (83 aa). Residues D446, N473, and G475 each coordinate Mg(2+). E479 provides a ligand contact to substrate. The residue at position 521 (T521) is a Phosphothreonine. S522 carries the post-translational modification Phosphoserine.

Belongs to the TPP enzyme family. Homotetramer. A metal cation is required as a cofactor. The cofactor is thiamine diphosphate.

It carries out the reaction a 2-oxocarboxylate + H(+) = an aldehyde + CO2. The chain is Probable pyruvate decarboxylase Pdc101 (pdc101) from Schizosaccharomyces pombe (strain 972 / ATCC 24843) (Fission yeast).